Reading from the N-terminus, the 497-residue chain is Acetyl-coenzyme A carboxylase carboxyl transferase subunit beta, chloroplastic (497 aa).

In terms of domain architecture, CoA carboxyltransferase N-terminal spans 230–497 (LWVQCENCYG…FFPVNSNSIK (268 aa)). Zn(2+) is bound by residues Cys-234, Cys-237, Cys-253, and Cys-256. A C4-type zinc finger spans residues 234-256 (CENCYGLNYKKFFRSKFNICEQC).

It belongs to the AccD/PCCB family. In terms of assembly, acetyl-CoA carboxylase is a heterohexamer composed of biotin carboxyl carrier protein, biotin carboxylase and 2 subunits each of ACCase subunit alpha and ACCase plastid-coded subunit beta (accD). Zn(2+) is required as a cofactor.

Its subcellular location is the plastid. The protein localises to the chloroplast stroma. It catalyses the reaction N(6)-carboxybiotinyl-L-lysyl-[protein] + acetyl-CoA = N(6)-biotinyl-L-lysyl-[protein] + malonyl-CoA. It functions in the pathway lipid metabolism; malonyl-CoA biosynthesis; malonyl-CoA from acetyl-CoA: step 1/1. Functionally, component of the acetyl coenzyme A carboxylase (ACC) complex. Biotin carboxylase (BC) catalyzes the carboxylation of biotin on its carrier protein (BCCP) and then the CO(2) group is transferred by the transcarboxylase to acetyl-CoA to form malonyl-CoA. The sequence is that of Acetyl-coenzyme A carboxylase carboxyl transferase subunit beta, chloroplastic from Nandina domestica (Heavenly bamboo).